A 176-amino-acid polypeptide reads, in one-letter code: Inorganic pyrophosphatase (176 aa).

Positions 30, 44, and 56 each coordinate substrate. 3 residues coordinate Mg(2+): D66, D71, and D103. A substrate-binding site is contributed by Y142.

Belongs to the PPase family. In terms of assembly, homohexamer. It depends on Mg(2+) as a cofactor.

It localises to the cytoplasm. It carries out the reaction diphosphate + H2O = 2 phosphate + H(+). In terms of biological role, catalyzes the hydrolysis of inorganic pyrophosphate (PPi) forming two phosphate ions. This is Inorganic pyrophosphatase from Vibrio parahaemolyticus serotype O3:K6 (strain RIMD 2210633).